The chain runs to 163 residues: Crossover junction endodeoxyribonuclease RuvC (163 aa).

Catalysis depends on residues aspartate 9, glutamate 76, and aspartate 148. Mg(2+)-binding residues include aspartate 9, glutamate 76, and aspartate 148.

This sequence belongs to the RuvC family. As to quaternary structure, homodimer which binds Holliday junction (HJ) DNA. The HJ becomes 2-fold symmetrical on binding to RuvC with unstacked arms; it has a different conformation from HJ DNA in complex with RuvA. In the full resolvosome a probable DNA-RuvA(4)-RuvB(12)-RuvC(2) complex forms which resolves the HJ. Requires Mg(2+) as cofactor.

Its subcellular location is the cytoplasm. It catalyses the reaction Endonucleolytic cleavage at a junction such as a reciprocal single-stranded crossover between two homologous DNA duplexes (Holliday junction).. In terms of biological role, the RuvA-RuvB-RuvC complex processes Holliday junction (HJ) DNA during genetic recombination and DNA repair. Endonuclease that resolves HJ intermediates. Cleaves cruciform DNA by making single-stranded nicks across the HJ at symmetrical positions within the homologous arms, yielding a 5'-phosphate and a 3'-hydroxyl group; requires a central core of homology in the junction. The consensus cleavage sequence is 5'-(A/T)TT(C/G)-3'. Cleavage occurs on the 3'-side of the TT dinucleotide at the point of strand exchange. HJ branch migration catalyzed by RuvA-RuvB allows RuvC to scan DNA until it finds its consensus sequence, where it cleaves and resolves the cruciform DNA. The sequence is that of Crossover junction endodeoxyribonuclease RuvC from Nostoc punctiforme (strain ATCC 29133 / PCC 73102).